The following is a 532-amino-acid chain: Bifunctional purine biosynthesis protein PurH (532 aa).

One can recognise an MGS-like domain in the interval 1 to 148; that stretch reads MQTPKPIKRA…KNHKDVTIVV (148 aa).

The protein belongs to the PurH family.

The catalysed reaction is (6R)-10-formyltetrahydrofolate + 5-amino-1-(5-phospho-beta-D-ribosyl)imidazole-4-carboxamide = 5-formamido-1-(5-phospho-D-ribosyl)imidazole-4-carboxamide + (6S)-5,6,7,8-tetrahydrofolate. It catalyses the reaction IMP + H2O = 5-formamido-1-(5-phospho-D-ribosyl)imidazole-4-carboxamide. It functions in the pathway purine metabolism; IMP biosynthesis via de novo pathway; 5-formamido-1-(5-phospho-D-ribosyl)imidazole-4-carboxamide from 5-amino-1-(5-phospho-D-ribosyl)imidazole-4-carboxamide (10-formyl THF route): step 1/1. It participates in purine metabolism; IMP biosynthesis via de novo pathway; IMP from 5-formamido-1-(5-phospho-D-ribosyl)imidazole-4-carboxamide: step 1/1. In Alteromonas mediterranea (strain DSM 17117 / CIP 110805 / LMG 28347 / Deep ecotype), this protein is Bifunctional purine biosynthesis protein PurH.